The following is a 1003-amino-acid chain: MPSKFSCRQLRETGQRFENFLVDRGQDRETDRERLRTIYNQDFKTSFGTPAPGFSSMLYGMKIANLAYVTKTRVRFFGLDRWADVWFPEKRRMKPGLEMSKHHRSLLATIFHDRAEYMHGKHGVNVEVQGPHEARDGQLLIRLDLNRKEVLTLRLRNGGTQPVTLTHLFPFCRTPQFSFCNGDRELPCLLGPGECYELHVHCKTSFVGYFPATVLWELLGPGEPGSEGAGTFYIARFLAAVAHSPLAAQLKPTTPFKRTQVSRNPVVTRRIEEGERPDRAKNYDLEFSLPLGTYYPPPRLRQLLPVLLRGTSIFTAPKEIAEIKAQLQTTLKWRNYEVKLRLLLHLEELQMEHDIRHYDLESVPMTWDPIDRNPRLLTLEVPGVAESRPSVLRGDHLFALLSSETHHEDPVTYKGFVHKVELDRVKLSFSTSLLSRFVDGLTFKVNFTFNRQPLRVQHRALELTGRWPLEPMLFPVASRGVPLLPSDVKLKLYDRSLESNPEQLQAMKHIVMGTTRPAPYIIFGPPGTGKTVTLVEAIKQVVKHLPKAHILACAPSNSGADLLCQRLRVHLPSSIYRLLAPSRDIHLVPEDIKPCCNWDAKKGDFVFPSKKKLQEYRVLITTLITASRLVSAQFPIDHFTHIFIDEAGHAMEPESLVAIAGLMEVKEADNPGGQLVLAGDPRQLGPVLRCPLTQKHGLGYSLLERLLTFNALYKKGPDGYNPQFITKLLRNYRSHPTILDVPNRLYYDGELQACADVVDRERFCRWEGLPRQDFPIIFHGVMGKDEREGNSPSFFNPEEAATVTSYLKQLLAPSSKKGKARLSPRSVGVISPYRKQVEKIRYCITKLDKQLRGLDDIKDLKVGSVEEFQGQERSVILISTVRSSQSFVQLDLDFNLGFLKNPKRFNVAVTRAKALLIVVGNPLLLGHDPDWKVFLEFCKENGGYTGCPFPAKLDLQQGQNLLQGLSKLSPSTSGLKSHDYLPQEREGEEGLSLQVEPEWRNEL.

At Lys148 the chain carries N6-acetyllysine. Residues Thr160 and Thr254 each carry the phosphothreonine modification. Ser432 is subject to Phosphoserine. Position 524–531 (524–531 (GPPGTGKT)) interacts with ATP. The DEAG box signature appears at 645-648 (DEAG). An interaction with AGO2 and APOBEC3G region spans residues 921-965 (NPLLLGHDPDWKVFLEFCKENGGYTGCPFPAKLDLQQGQNLLQGL). The segment at 968 to 1003 (LSPSTSGLKSHDYLPQEREGEEGLSLQVEPEWRNEL) is disordered. Ser969 and Ser977 each carry phosphoserine. The segment covering 976–985 (KSHDYLPQER) has biased composition (basic and acidic residues).

It belongs to the DNA2/NAM7 helicase family. SDE3 subfamily. Interacts with DICER1, AGO2, TARBP2, EIF6 and RPL7A (60S ribosome subunit); they form a large RNA-induced silencing complex (RISC). Interacts with APOBEC3G in an RNA-dependent manner. Interacts with TRIM71 (via NHL repeats) in an RNA-dependent manner. Interacts with both protein products of LIRE1, ORF1p and ORF2p. Interacts with TUT4 and, to a lesser extent, TUT7; the interactions are RNA-dependent. Interacts with AGO2, TNRC6B and UPF1; the interactions are direct and RNA-dependent. Interacts with FMR1; this interaction is direct, occurs in an RNA-dependent manner on polysomes and induces association of MOV10 with RNAs. Interacts with SHFL; the interaction increases in presence of RNA. Interacts with DHX34; the interaction is-RNA independent. Interacts with RBM46. In terms of processing, ubiquitinated by the DCX(DCAF12) complex that specifically recognizes the glutamate-leucine (Glu-Leu) degron at the C-terminus, leading to its degradation.

The protein localises to the cytoplasm. The protein resides in the P-body. Its subcellular location is the cytoplasmic ribonucleoprotein granule. It localises to the stress granule. It is found in the nucleus. The catalysed reaction is ATP + H2O = ADP + phosphate + H(+). In terms of biological role, 5' to 3' RNA helicase that is involved in a number of cellular roles ranging from mRNA metabolism and translation, modulation of viral infectivity, inhibition of retrotransposition, or regulation of synaptic transmission. Plays an important role in innate antiviral immunity by promoting type I interferon production. Mechanistically, specifically uses IKKepsilon/IKBKE as the mediator kinase for IRF3 activation. Contributes to UPF1 mRNA target degradation by translocation along 3' UTRs. Required for microRNA (miRNA)-mediated gene silencing by the RNA-induced silencing complex (RISC). Required for both miRNA-mediated translational repression and miRNA-mediated cleavage of complementary mRNAs by RISC. In cooperation with FMR1, regulates miRNA-mediated translational repression by AGO2. Restricts retrotransposition of long interspersed element-1 (LINE-1) in cooperation with TUT4 and TUT7 counteracting the RNA chaperonne activity of L1RE1. Facilitates LINE-1 uridylation by TUT4 and TUT7. Required for embryonic viability and for normal central nervous system development and function. Plays two critical roles in early brain development: suppresses retroelements in the nucleus by directly inhibiting cDNA synthesis, while regulates cytoskeletal mRNAs to influence neurite outgrowth in the cytosol. May function as a messenger ribonucleoprotein (mRNP) clearance factor. The chain is Putative helicase MOV-10 (MOV10) from Bos taurus (Bovine).